Reading from the N-terminus, the 309-residue chain is Taste receptor type 2 member 46 (309 aa).

Met1 is a topological domain (extracellular). Residues 2 to 22 (ITFLPIIFSILIVVTFVIGNF) traverse the membrane as a helical segment. At 23–46 (ANGFIALVNSIEWFKRQKISFADQ) the chain is on the cytoplasmic side. The chain crosses the membrane as a helical span at residues 47–67 (ILTALAVSRVGLLWVLVLNWY). Over 68–86 (ATELNPAFNSIEVRITAYN) the chain is Extracellular. Residues 87–107 (VWAVINHFSNWLATSLSIFYL) form a helical membrane-spanning segment. The Cytoplasmic portion of the chain corresponds to 108-126 (LKIANFSNLIFLHLKRRVK). Residues 127–147 (SVVLVILLGPLLFLVCHLFVI) traverse the membrane as a helical segment. At 148–178 (NMNQIIWTKEYEGNMTWKIKLRSAMYLSNTT) the chain is on the extracellular side. Residues Asn161 and Asn176 are each glycosylated (N-linked (GlcNAc...) asparagine). Residues 179–199 (VTILANLVPFTLTLISFLLLI) form a helical membrane-spanning segment. At 200–229 (CSLCKHLKKMQLHGKGSQDPSMKVHIKALQ) the chain is on the cytoplasmic side. The helical transmembrane segment at 230–250 (TVTSFLLLCAIYFLSIIMSVW) threads the bilayer. The Extracellular segment spans residues 251-259 (SFESLENKP). The chain crosses the membrane as a helical span at residues 260 to 280 (VFMFCEAIAFSYPSTHPFILI). Residues 281–309 (WGNKKLKQTFLSVLWHVRYWVKGEKPSSS) lie on the Cytoplasmic side of the membrane.

The protein belongs to the G-protein coupled receptor T2R family. Expressed in subsets of taste receptor cells of the tongue and exclusively in gustducin-positive cells. Expressed on ciliated airway epithelium.

It localises to the membrane. The protein resides in the cell projection. The protein localises to the cilium membrane. Its function is as follows. Receptor that may play a role in the perception of bitterness and is gustducin-linked. May play a role in sensing the chemical composition of the gastrointestinal content. The activity of this receptor may stimulate alpha gustducin, mediate PLC-beta-2 activation and lead to the gating of TRPM5. In airway epithelial cells, binding of bitter compounds increases the intracellular calcium ion concentration and stimulates ciliary beat frequency. In Homo sapiens (Human), this protein is Taste receptor type 2 member 46 (TAS2R46).